The sequence spans 363 residues: S-methylmethionine--homocysteine S-methyltransferase BHMT2 (363 aa).

The Hcy-binding domain maps to 11-305 (RGILERLESG…YHIRAIAEEL (295 aa)). Zn(2+)-binding residues include Cys-208, Cys-290, and Cys-291. At Ser-321 the chain carries Phosphoserine.

In terms of assembly, homotetramer. Zn(2+) serves as cofactor.

It catalyses the reaction S-methyl-L-methionine + L-homocysteine = 2 L-methionine + H(+). It functions in the pathway amino-acid biosynthesis; L-methionine biosynthesis via de novo pathway; L-methionine from L-homocysteine (BhmT route): step 1/1. In terms of biological role, involved in the regulation of homocysteine metabolism. Converts betaine and homocysteine to dimethylglycine and methionine, respectively. This reaction is also required for the irreversible oxidation of choline. In Pongo abelii (Sumatran orangutan), this protein is S-methylmethionine--homocysteine S-methyltransferase BHMT2 (BHMT2).